We begin with the raw amino-acid sequence, 41 residues long: CGILGLGGVGHMGVKAFGLHVTVISSSDKFVVDVAASNLDK.

Belongs to the zinc-containing alcohol dehydrogenase family. Requires Zn(2+) as cofactor.

The catalysed reaction is (E)-cinnamyl alcohol + NADP(+) = (E)-cinnamaldehyde + NADPH + H(+). The enzyme catalyses (E)-coniferol + NADP(+) = (E)-coniferaldehyde + NADPH + H(+). It catalyses the reaction (E)-sinapyl alcohol + NADP(+) = (E)-sinapaldehyde + NADPH + H(+). It carries out the reaction (E)-4-coumaroyl alcohol + NADP(+) = (E)-4-coumaraldehyde + NADPH + H(+). The catalysed reaction is (E)-caffeyl alcohol + NADP(+) = (E)-caffeyl aldehyde + NADPH + H(+). It participates in aromatic compound metabolism; phenylpropanoid biosynthesis. Functionally, involved in lignin biosynthesis. Catalyzes the final step specific for the production of lignin monomers, like coniferyl alcohol, sinapyl alcohol and 4-coumaryl alcohol. This is Probable cinnamyl alcohol dehydrogenase 2 from Pseudotsuga menziesii (Douglas-fir).